Consider the following 79-residue polypeptide: Small ribosomal subunit protein bS18 (79 aa).

This sequence belongs to the bacterial ribosomal protein bS18 family. In terms of assembly, part of the 30S ribosomal subunit. Forms a tight heterodimer with protein bS6.

In terms of biological role, binds as a heterodimer with protein bS6 to the central domain of the 16S rRNA, where it helps stabilize the platform of the 30S subunit. The chain is Small ribosomal subunit protein bS18 from Listeria innocua serovar 6a (strain ATCC BAA-680 / CLIP 11262).